Consider the following 437-residue polypeptide: Kynureninase (437 aa).

Residues leucine 99, threonine 100, 127-130, serine 183, aspartate 212, histidine 215, and tyrosine 237 each bind pyridoxal 5'-phosphate; that span reads FPSD. An N6-(pyridoxal phosphate)lysine modification is found at lysine 238. Pyridoxal 5'-phosphate contacts are provided by tryptophan 267 and asparagine 295.

This sequence belongs to the kynureninase family. As to quaternary structure, homodimer. It depends on pyridoxal 5'-phosphate as a cofactor.

It localises to the cytoplasm. It catalyses the reaction L-kynurenine + H2O = anthranilate + L-alanine + H(+). The catalysed reaction is 3-hydroxy-L-kynurenine + H2O = 3-hydroxyanthranilate + L-alanine + H(+). The protein operates within amino-acid degradation; L-kynurenine degradation; L-alanine and anthranilate from L-kynurenine: step 1/1. Its pathway is cofactor biosynthesis; NAD(+) biosynthesis; quinolinate from L-kynurenine: step 2/3. In terms of biological role, catalyzes the cleavage of L-kynurenine (L-Kyn) and L-3-hydroxykynurenine (L-3OHKyn) into anthranilic acid (AA) and 3-hydroxyanthranilic acid (3-OHAA), respectively. The protein is Kynureninase of Yarrowia lipolytica (strain CLIB 122 / E 150) (Yeast).